A 179-amino-acid polypeptide reads, in one-letter code: Acireductone dioxygenase (179 aa).

Residues histidine 97, histidine 99, glutamate 103, and histidine 141 each coordinate Fe(2+). The Ni(2+) site is built by histidine 97, histidine 99, glutamate 103, and histidine 141.

The protein belongs to the acireductone dioxygenase (ARD) family. As to quaternary structure, monomer. Fe(2+) is required as a cofactor. Requires Ni(2+) as cofactor.

It carries out the reaction 1,2-dihydroxy-5-(methylsulfanyl)pent-1-en-3-one + O2 = 3-(methylsulfanyl)propanoate + CO + formate + 2 H(+). The catalysed reaction is 1,2-dihydroxy-5-(methylsulfanyl)pent-1-en-3-one + O2 = 4-methylsulfanyl-2-oxobutanoate + formate + 2 H(+). Its pathway is amino-acid biosynthesis; L-methionine biosynthesis via salvage pathway; L-methionine from S-methyl-5-thio-alpha-D-ribose 1-phosphate: step 5/6. Its function is as follows. Catalyzes 2 different reactions between oxygen and the acireductone 1,2-dihydroxy-3-keto-5-methylthiopentene (DHK-MTPene) depending upon the metal bound in the active site. Fe-containing acireductone dioxygenase (Fe-ARD) produces formate and 2-keto-4-methylthiobutyrate (KMTB), the alpha-ketoacid precursor of methionine in the methionine recycle pathway. Ni-containing acireductone dioxygenase (Ni-ARD) produces methylthiopropionate, carbon monoxide and formate, and does not lie on the methionine recycle pathway. This Granulibacter bethesdensis (strain ATCC BAA-1260 / CGDNIH1) protein is Acireductone dioxygenase.